A 58-amino-acid polypeptide reads, in one-letter code: Large ribosomal subunit protein eL24 (58 aa).

4 residues coordinate Zn(2+): C6, C9, C32, and C36. A C4-type zinc finger spans residues 6 to 36 (CAFCGADILPGYGIMYVKTDGTTLRFCSRKC).

Belongs to the eukaryotic ribosomal protein eL24 family. As to quaternary structure, part of the 50S ribosomal subunit. Forms a cluster with proteins L3 and L14. It depends on Zn(2+) as a cofactor.

Binds to the 23S rRNA. This is Large ribosomal subunit protein eL24 from Pyrobaculum islandicum (strain DSM 4184 / JCM 9189 / GEO3).